Here is a 353-residue protein sequence, read N- to C-terminus: Probable butyrate kinase (353 aa).

Belongs to the acetokinase family.

It is found in the cytoplasm. It catalyses the reaction butanoate + ATP = butanoyl phosphate + ADP. This is Probable butyrate kinase from Bacteroides thetaiotaomicron (strain ATCC 29148 / DSM 2079 / JCM 5827 / CCUG 10774 / NCTC 10582 / VPI-5482 / E50).